The following is a 216-amino-acid chain: MTACVLIVDAGLGNIGSVVAAYDRLGVRNFRIRKPPSDIACYTHLILPGVGSFSAGMDSLNSLGWSDWLKDVWLPTGRPLLGICLGMQLLASRGFEGSDSGNSIPGLDLISGKIVLMSPSQNLALPHVGWNSVYWSNTITPLSVDINSGCDFYFVHSYTFRCDDDSNCLATSNYGSQFSAVVSDISRNVWGMQFHPEKSQKLGKCLLQNFIALNPC.

One can recognise a Glutamine amidotransferase type-1 domain in the interval 4–216; it reads CVLIVDAGLG…LQNFIALNPC (213 aa). The active-site Nucleophile is the cysteine 84. Active-site residues include histidine 195 and glutamate 197.

As to quaternary structure, heterodimer of HisH and HisF.

Its subcellular location is the cytoplasm. The enzyme catalyses 5-[(5-phospho-1-deoxy-D-ribulos-1-ylimino)methylamino]-1-(5-phospho-beta-D-ribosyl)imidazole-4-carboxamide + L-glutamine = D-erythro-1-(imidazol-4-yl)glycerol 3-phosphate + 5-amino-1-(5-phospho-beta-D-ribosyl)imidazole-4-carboxamide + L-glutamate + H(+). It carries out the reaction L-glutamine + H2O = L-glutamate + NH4(+). It participates in amino-acid biosynthesis; L-histidine biosynthesis; L-histidine from 5-phospho-alpha-D-ribose 1-diphosphate: step 5/9. Functionally, IGPS catalyzes the conversion of PRFAR and glutamine to IGP, AICAR and glutamate. The HisH subunit provides the glutamine amidotransferase activity that produces the ammonia necessary to HisF for the synthesis of IGP and AICAR. The sequence is that of Imidazole glycerol phosphate synthase subunit HisH 1 (hisH1) from Prochlorococcus marinus (strain MIT 9313).